The primary structure comprises 80 residues: MAVKKPENMTFEATIEELDSLVDQLENGDLALDDALRKFERGIALARAGQTKLSDAEQRVSILLSEDDEAPLNDFKPDSE.

It belongs to the XseB family. As to quaternary structure, heterooligomer composed of large and small subunits.

Its subcellular location is the cytoplasm. It catalyses the reaction Exonucleolytic cleavage in either 5'- to 3'- or 3'- to 5'-direction to yield nucleoside 5'-phosphates.. Its function is as follows. Bidirectionally degrades single-stranded DNA into large acid-insoluble oligonucleotides, which are then degraded further into small acid-soluble oligonucleotides. This chain is Exodeoxyribonuclease 7 small subunit, found in Vibrio parahaemolyticus serotype O3:K6 (strain RIMD 2210633).